A 558-amino-acid chain; its full sequence is Ankyrin repeat protein OPG189 (558 aa).

7 ANK repeats span residues 65-95 (YGEN…NINK), 169-205 (YGCT…DVDK), 209-239 (YGNT…NIDS), 243-272 (NRYT…NVNA), 276-304 (FGTT…ELEI), 339-368 (YNET…DFET), and 372-401 (SGCT…SLKI).

Belongs to the orthopoxvirus OPG189 protein family.

Its function is as follows. Contributes to viral release without involving rearrangement of host actin. This chain is Ankyrin repeat protein OPG189 (OPG189), found in Homo sapiens (Human).